The following is a 332-amino-acid chain: Glucokinase (332 aa).

Residue 15-20 (ADIGGT) coordinates ATP.

Belongs to the bacterial glucokinase family.

Its subcellular location is the cytoplasm. It catalyses the reaction D-glucose + ATP = D-glucose 6-phosphate + ADP + H(+). The protein is Glucokinase of Campylobacter jejuni subsp. doylei (strain ATCC BAA-1458 / RM4099 / 269.97).